The following is a 240-amino-acid chain: UDP-2,3-diacylglucosamine hydrolase (240 aa).

Residues Asp9, His11, Asp43, Asn81, and His116 each contribute to the Mn(2+) site. 81–82 (NR) is a binding site for substrate. Residues Asp124, Ser162, Lys166, Lys169, and His197 each contribute to the substrate site. His197 and His199 together coordinate Mn(2+).

Belongs to the LpxH family. Mn(2+) serves as cofactor.

Its subcellular location is the cell inner membrane. The enzyme catalyses UDP-2-N,3-O-bis[(3R)-3-hydroxytetradecanoyl]-alpha-D-glucosamine + H2O = 2-N,3-O-bis[(3R)-3-hydroxytetradecanoyl]-alpha-D-glucosaminyl 1-phosphate + UMP + 2 H(+). The protein operates within glycolipid biosynthesis; lipid IV(A) biosynthesis; lipid IV(A) from (3R)-3-hydroxytetradecanoyl-[acyl-carrier-protein] and UDP-N-acetyl-alpha-D-glucosamine: step 4/6. Functionally, hydrolyzes the pyrophosphate bond of UDP-2,3-diacylglucosamine to yield 2,3-diacylglucosamine 1-phosphate (lipid X) and UMP by catalyzing the attack of water at the alpha-P atom. Involved in the biosynthesis of lipid A, a phosphorylated glycolipid that anchors the lipopolysaccharide to the outer membrane of the cell. The chain is UDP-2,3-diacylglucosamine hydrolase from Neisseria meningitidis serogroup B (strain ATCC BAA-335 / MC58).